The chain runs to 652 residues: Leucine-rich repeat-containing protein 4 (652 aa).

The first 40 residues, 1-40 (MKLLWQVTVHHTWNAVLLPVVYLTAQVWILCAAIAAAASA), serve as a signal peptide directing secretion. Over 1–526 (MKLLWQVTVH…SLDEVMKTTK (526 aa)) the chain is Extracellular. In terms of domain architecture, LRRNT spans 41–74 (GPQNCPSVCSCSNQFSKVVCTRRGLSEVPQGIPS). Cystine bridges form between cysteine 45–cysteine 51 and cysteine 49–cysteine 60. 9 LRR repeats span residues 75–96 (NTRYLNLMENNIQMIQADTFRH), 99–120 (HLEVLQLGRNAIRQIEVGAFNG), 123–144 (SLNTLELFDNWLTVIPSGAFEY), 147–168 (KLRELWLRNNPIESIPSYAFNR), 171–193 (SLMRLDLGELKKLEYISEGAFEG), 196–217 (NLKYLNLGMCNIKDMPNLTPLV), 218–239 (GLEELEMSGNHFPEIRPGSFHG), 242–263 (SLKKLWVMNSQVSLIERNAFDG), and 266–287 (SLVELNLAHNNLSSLPHDLFTP). The LRRCT domain maps to 299 to 351 (NPWNCDCDILWLAWWLREYIPTNSTCCGRCHAPMHMRGRYLVEVDQASFQCSA). 2 disulfide bridges follow: cysteine 303-cysteine 328 and cysteine 305-cysteine 349. N-linked (GlcNAc...) asparagine glycosylation is found at asparagine 321 and asparagine 362. The Ig-like C2-type domain occupies 352-441 (PFIMDAPRDL…SNASAYLNVS (90 aa)). Cysteine 373 and cysteine 423 are oxidised to a cystine. A helical transmembrane segment spans residues 527–547 (IIIGCFVAVTLLAAAMLIVFY). Over 548–652 (KLRKRHQQRS…TKDKVQETQI (105 aa)) the chain is Cytoplasmic.

In terms of assembly, interacts (via LRR repeats) with NTNG2. Interacts with DLG4. Found in a complex with NMDA receptors. N-glycosylated. In terms of tissue distribution, mainly expressed in the brain. Expression is concentrated in the olfactory bulb, cortex, hippocampus and cerebellum in adult brain. Detected both embryonically and postnatally with stronger expression in postnatal stages.

It is found in the membrane. The protein localises to the postsynaptic cell membrane. In terms of biological role, synaptic adhesion protein. Regulates the formation of exitatory synapses through the recruitment of pre-and-postsynaptic proteins. Organize the lamina/pathway-specific differentiation of dendrites. Plays an important role for auditory synaptic responses. Involved in the suppression of glioma. This chain is Leucine-rich repeat-containing protein 4 (Lrrc4), found in Rattus norvegicus (Rat).